We begin with the raw amino-acid sequence, 55 residues long: Large ribosomal subunit protein bL33 (55 aa).

It belongs to the bacterial ribosomal protein bL33 family.

This Allorhizobium ampelinum (strain ATCC BAA-846 / DSM 112012 / S4) (Agrobacterium vitis (strain S4)) protein is Large ribosomal subunit protein bL33.